The following is a 290-amino-acid chain: UPF0761 membrane protein YihY (290 aa).

The next 6 membrane-spanning stretches (helical) occupy residues 44–64 (LLSL…FPMF), 104–124 (VGAC…DSAL), 140–160 (FAVY…SLAI), 183–203 (VLPL…VPTT), 210–230 (AIVG…GFAL), and 244–264 (VLAV…IVLL).

The protein belongs to the UPF0761 family.

It is found in the cell inner membrane. The protein is UPF0761 membrane protein YihY of Salmonella arizonae (strain ATCC BAA-731 / CDC346-86 / RSK2980).